Consider the following 78-residue polypeptide: Probable [Fe-S]-dependent transcriptional repressor (78 aa).

Residues C56, C61, C64, and C70 each coordinate iron-sulfur cluster.

It belongs to the FeoC family.

In terms of biological role, may function as a transcriptional regulator that controls feoABC expression. The protein is Probable [Fe-S]-dependent transcriptional repressor of Escherichia fergusonii (strain ATCC 35469 / DSM 13698 / CCUG 18766 / IAM 14443 / JCM 21226 / LMG 7866 / NBRC 102419 / NCTC 12128 / CDC 0568-73).